Here is a 539-residue protein sequence, read N- to C-terminus: 4-hydroxybenzoate--CoA/benzoate--CoA ligase (539 aa).

The protein belongs to the ATP-dependent AMP-binding enzyme family. Benzoate-CoA ligase subfamily. As to quaternary structure, homodimer. The N-terminus is blocked.

It catalyses the reaction 4-hydroxybenzoate + ATP + CoA = 4-hydroxybenzoyl-CoA + AMP + diphosphate. The catalysed reaction is benzoate + ATP + CoA = benzoyl-CoA + AMP + diphosphate. In terms of biological role, catalyzes the ligation of 4-hydroxybenzoate, benzoate or cyclohex-1,4-dienecarboxylate and CoA at the expense of ATP. The enzyme shows low activity towards cyclo-2,5-dienecarboxylate, 4-fluorobenzoate, 4-chlorobenzoate and 2-methoxybenzoate. The protein is 4-hydroxybenzoate--CoA/benzoate--CoA ligase (hbaA) of Rhodopseudomonas palustris (strain ATCC BAA-98 / CGA009).